Here is a 186-residue protein sequence, read N- to C-terminus: Probable peptidyl-tRNA hydrolase 2 (186 aa).

Belongs to the PTH2 family.

It carries out the reaction an N-acyl-L-alpha-aminoacyl-tRNA + H2O = an N-acyl-L-amino acid + a tRNA + H(+). Its function is as follows. The natural substrate for this enzyme may be peptidyl-tRNAs which drop off the ribosome during protein synthesis. In Drosophila melanogaster (Fruit fly), this protein is Probable peptidyl-tRNA hydrolase 2.